A 608-amino-acid chain; its full sequence is MSLNALDCARLTGQTPYTVEVFRPIRNIFNRVREYTRASTTSVGLAWMSKYIYQYHRLMLMNLSPREPATEGWPLFLYPPPHLLVGYQYLVRTCNDYVFDTRSYSRLKYTEIHLPLQQKLNWTVMANCSYTINTGAYHRFIDFENFEETLAQVQQAVLAERVVADLALIRPMRGYGTTNMAGDRQVPVEGLLQDHYKNLSQCQNHAWGLADRMRIQNAGNKDIVILTTIRKLKTAFFNFLVSPRNPHTILSLPCDCLWLDAFMQKFTDPSLSQFQTIQSLPSQSVTKSIISALSLPGPAPCTPLSGGAFELRPRENGRAVTEEMRRRRGEMIERFIDRLPMRRRRRRAPPPPPMSEELSEPEVEAFPPASPPRRSFEEEVRDTIVEAIRLLQEELTVSARNEQFFNFAINFYEVIQRLEMLGNINELTIRRWVMYFFVAEHVATTLNYLHHNLRLYPPCSRWVDLELAQVVMRARDHEGQVVYSRVWNEMGENAFSQLMARVSGDLAATVERAGLGELEEEEMEQFMADIAYHENSGDVSEILRQVAINDTEVDSMELSFRFKVTGPVVFSQNRQIQSINRRVVALASQLRMQHRPLPAQHEQVQLPP.

Residues 338 to 347 (RLPMRRRRRR) carry the Nuclear localization signal motif. Residues 342–377 (RRRRRRAPPPPPMSEELSEPEVEAFPPASPPRRSFE) are disordered. At serine 536 the chain carries O-(5'-phospho-DNA)-serine.

It belongs to the adenoviridae terminal protein family. Heterodimer with the polymerase; this heterodimer binds to bp 9 to 18 of the genome. Interacts with host POU2F1; POU2F1 binds to the auxiliary sequences in the inverted terminal repeats and tethers the pTP-POL heterodimer to the origin DNA thereby participating in the assembly of the pre-initiation complex (POL-TP-DBP-NFIA-POU2F1). Post-translationally, preterminal protein is used to replicate viral genome, upon genomic encapsidation it is processed first into iTP and finally into TP by adenovirus protease.

It localises to the host nucleus matrix. Functionally, protein covalently bound to the viral DNA that acts as a primer for viral genomic replication by DNA strand displacement. Assembles on the viral origin of replication in an initiation complex with viral polymerase, DBP, host NFIA and host POU2F1/OCT1. During initiation, the polymerase covalently couples the first dCTP with Ser-580 of pTP. The terminal protein stimulates the template activity over 20 fold compared to protein-free templates. Neo-synthesized viral genomes are linked to two preterminal proteins, one for each 5' end. These new genomes are encapsidated in the nucleus, and during capsid maturation by viral protease, preterminal protein is first cleaved into intermediary (iTP), then into mature TP. May play a role in host nuclear matrix localization of genomic DNA. This chain is Preterminal protein, found in Canine adenovirus serotype 1 (strain CLL) (CAdV-1).